Reading from the N-terminus, the 466-residue chain is MTSTTTQPTTQPMAKPKVAFAHLGCEKNRVDTEHMVGLLAEAGYGVSTDEEDASVVVVNTCSFIQDAREESVRTLVGLAEQGKELIIAGCLAQHFQEELLESIPEAKAIVGTGDYQHIVDVLQRVEAGERVNRVSAVPSFVGDEHLPRQRTTDQAVAYLKVAEGCDYRCAFCIIPKLRGDQRSRPIESIVAEAHQLAEQGVQELILISQITTNYGLDLYGKPKLAELLRALGEVEIPWIRVHYAYPTGLTASVVAAYRDVPNVVPYLDLPLQHSHPDVLRAMNRPWQADVNERLLNEIREQLPDAVLRTTLIVGFPGETEEHFQHLKHFLETQRFDHVGIFTFSPEDGTAAADLPNRVDPDVAQARKDALMALQQPIAAERNQRWVGKTVDVLIEQHNPQTGEMIGRCARFAPEVDGEVHVQPGDDGQQAAPGSFVPVKITGADIYDLTGHIVGARSMVAEARVKD.

The MTTase N-terminal domain occupies 16–127; sequence PKVAFAHLGC…IVDVLQRVEA (112 aa). Positions 25, 61, 90, 165, 169, and 172 each coordinate [4Fe-4S] cluster. In terms of domain architecture, Radical SAM core spans 151–380; that stretch reads TTDQAVAYLK…MALQQPIAAE (230 aa). A TRAM domain is found at 383–454; that stretch reads QRWVGKTVDV…IYDLTGHIVG (72 aa).

This sequence belongs to the methylthiotransferase family. RimO subfamily. The cofactor is [4Fe-4S] cluster.

It is found in the cytoplasm. It catalyses the reaction L-aspartate(89)-[ribosomal protein uS12]-hydrogen + (sulfur carrier)-SH + AH2 + 2 S-adenosyl-L-methionine = 3-methylsulfanyl-L-aspartate(89)-[ribosomal protein uS12]-hydrogen + (sulfur carrier)-H + 5'-deoxyadenosine + L-methionine + A + S-adenosyl-L-homocysteine + 2 H(+). Catalyzes the methylthiolation of an aspartic acid residue of ribosomal protein uS12. The sequence is that of Ribosomal protein uS12 methylthiotransferase RimO from Synechococcus sp. (strain CC9902).